Consider the following 450-residue polypeptide: Citrate/malate-proton symporter (450 aa).

Over 1 to 32 (MGELQTHMQLQTDTIHEGVRKENWFAKAMNIK) the chain is Cytoplasmic. The chain crosses the membrane as a helical span at residues 33–53 (VGIIPLPVYALLFILITVFVM). Over 54–64 (HHDVKSDILTS) the chain is Extracellular. The chain crosses the membrane as a helical span at residues 65–85 (IAVMAFFGFTFAQIGKSIPIV). The Cytoplasmic portion of the chain corresponds to 86 to 87 (RS). The chain crosses the membrane as a helical span at residues 88–108 (IGGPAILATFIPSAVVYYHLL). The Extracellular portion of the chain corresponds to 109-118 (PNDIVKSTTE). The helical transmembrane segment at 119 to 139 (FTENSNFLYLFIAGIVVGSIL) threads the bilayer. Residues 140-152 (GMKRETLVKAFMK) are Cytoplasmic-facing. The chain crosses the membrane as a helical span at residues 153-173 (IFIPLIVGSVTAAIVGLAVGT). Residues 174–217 (LLGLGFQHTLLYIVIPIMAGGVGEGAIPLSIGYSDIMPISQGEA) lie on the Extracellular side of the membrane. A helical membrane pass occupies residues 218–238 (FALVLPSIMLGSLCAIILAGL). Over 239-273 (LNRIGKKKPEWTGNGKVDRSEEESPALEESQSGQQ) the chain is Cytoplasmic. Residues 249 to 268 (WTGNGKVDRSEEESPALEES) are disordered. Residues 274-294 (MFNLSLFASGGILAVSLYLVG) traverse the membrane as a helical segment. Residue M295 is a topological domain, extracellular. The chain crosses the membrane as a helical span at residues 296 to 316 (LAHDFFGFPAPVAMLLLAVLI). Over 317–335 (KLFRLVPASIENGAFGVSR) the chain is Cytoplasmic. A helical membrane pass occupies residues 336–356 (FFSTAVTYPLLFAIGVSMTPW). The Extracellular portion of the chain corresponds to 357-364 (DKLVAAFN). A helical membrane pass occupies residues 365–385 (LSNIITILSVVVTMMAVGFFT). Topologically, residues 386–428 (GKWLNMYPIETAIINACHSGQGGTGDVAILSAAERLELMPFAQ) are cytoplasmic. The chain crosses the membrane as a helical span at residues 429-446 (VSTRIGGAITVSLTLLLL). Over 447–450 (HQFY) the chain is Extracellular.

It belongs to the 2-hydroxycarboxylate transporter (2-HCT) (TC 2.A.24) family.

Its subcellular location is the cell membrane. It catalyses the reaction citrate(in) + 3 H(+)(in) = citrate(out) + 3 H(+)(out). The catalysed reaction is (S)-malate(in) + 2 H(+)(in) = (S)-malate(out) + 2 H(+)(out). The uptake activity is inhibited by divalent metal ions such as Ca(2+), Mg(2+) and Ni(2+). Proton motive force-driven secondary transporter that catalyzes the uptake of both citrate and malate. Is an electroneutral proton-solute symporter: the number of protons transported is equal to the valence of the transported anions. Translocates the free citrate and malate anions. Citramalate binds to the transporter, but it is not translocated. Is strictly stereoselective, recognizing only the (S)-enantiomers of malate and citramalate. This Bacillus subtilis (strain 168) protein is Citrate/malate-proton symporter.